A 289-amino-acid polypeptide reads, in one-letter code: Ribosomal protein L11 methyltransferase (289 aa).

S-adenosyl-L-methionine contacts are provided by Thr-142, Gly-163, Asp-185, and Asn-226.

The protein belongs to the methyltransferase superfamily. PrmA family.

The protein localises to the cytoplasm. The catalysed reaction is L-lysyl-[protein] + 3 S-adenosyl-L-methionine = N(6),N(6),N(6)-trimethyl-L-lysyl-[protein] + 3 S-adenosyl-L-homocysteine + 3 H(+). Functionally, methylates ribosomal protein L11. The protein is Ribosomal protein L11 methyltransferase of Legionella pneumophila (strain Paris).